Here is a 365-residue protein sequence, read N- to C-terminus: tRNA-specific 2-thiouridylase MnmA (365 aa).

ATP is bound by residues 14–21 and Leu-40; that span reads AMSGGVDS. Residue Cys-108 is the Nucleophile of the active site. Cys-108 and Cys-204 are joined by a disulfide. Gly-132 is an ATP binding site. Positions 154–156 are interaction with tRNA; sequence KDQ. Catalysis depends on Cys-204, which acts as the Cysteine persulfide intermediate.

The protein belongs to the MnmA/TRMU family.

Its subcellular location is the cytoplasm. The enzyme catalyses S-sulfanyl-L-cysteinyl-[protein] + uridine(34) in tRNA + AH2 + ATP = 2-thiouridine(34) in tRNA + L-cysteinyl-[protein] + A + AMP + diphosphate + H(+). Catalyzes the 2-thiolation of uridine at the wobble position (U34) of tRNA, leading to the formation of s(2)U34. This chain is tRNA-specific 2-thiouridylase MnmA, found in Rickettsia akari (strain Hartford).